The sequence spans 621 residues: 1-deoxy-D-xylulose-5-phosphate synthase (621 aa).

Thiamine diphosphate contacts are provided by residues His-80 and 121 to 123; that span reads GHS. Asp-152 is a binding site for Mg(2+). Residues 153-154, Asn-181, Tyr-288, and Glu-370 each bind thiamine diphosphate; that span reads GA. Asn-181 contacts Mg(2+).

It belongs to the transketolase family. DXPS subfamily. As to quaternary structure, homodimer. Mg(2+) is required as a cofactor. The cofactor is thiamine diphosphate.

The enzyme catalyses D-glyceraldehyde 3-phosphate + pyruvate + H(+) = 1-deoxy-D-xylulose 5-phosphate + CO2. Its pathway is metabolic intermediate biosynthesis; 1-deoxy-D-xylulose 5-phosphate biosynthesis; 1-deoxy-D-xylulose 5-phosphate from D-glyceraldehyde 3-phosphate and pyruvate: step 1/1. In terms of biological role, catalyzes the acyloin condensation reaction between C atoms 2 and 3 of pyruvate and glyceraldehyde 3-phosphate to yield 1-deoxy-D-xylulose-5-phosphate (DXP). This is 1-deoxy-D-xylulose-5-phosphate synthase from Erwinia tasmaniensis (strain DSM 17950 / CFBP 7177 / CIP 109463 / NCPPB 4357 / Et1/99).